We begin with the raw amino-acid sequence, 372 residues long: Peptide chain release factor 1 (372 aa).

An N5-methylglutamine modification is found at Q237.

This sequence belongs to the prokaryotic/mitochondrial release factor family. Post-translationally, methylated by PrmC. Methylation increases the termination efficiency of RF1.

It localises to the cytoplasm. Functionally, peptide chain release factor 1 directs the termination of translation in response to the peptide chain termination codons UAG and UAA. The protein is Peptide chain release factor 1 of Anaeromyxobacter sp. (strain Fw109-5).